We begin with the raw amino-acid sequence, 285 residues long: NAC domain-containing protein 92 (285 aa).

The NAC domain maps to 20–170 (LPPGFRFHPT…EWVICRVFQK (151 aa)). The DNA-binding element occupies 117–176 (VGMKKTLVFYKGRAPKGVKTNWVMHEYRLEGKYCIENLPQTAKNEWVICRVFQKRADGTK).

In terms of assembly, forms homodimers. Interacts with GLK1 and GLK2. Interacts with NLA. In terms of processing, ubiquitinated by NLA. Ubiquitination of NAC92 leads to its degradation by the proteasome during leaf senescence under nitrogen deficiency. Mostly expressed in roots and flowers, and, to a lower extent, in shoots and leaves. Particularly expressed in old and senescing tissues.

The protein resides in the nucleus. In terms of biological role, transcription activator that binds to DNA in promoters of target genes on a specific bipartite motif 5'-[ACG][CA]GT[AG](5-6n)[CT]AC[AG]-3'. Promotes lateral root development. Triggers the expression of senescence-associated genes during age-, salt- and dark-induced senescence through a regulatory network that may involve cross-talk with salt- and H(2)O(2)-dependent signaling pathways. Also regulates genes during seed germination. Positively regulates aging-induced cell death. Involved in age-related resistance (ARR) against Pseudomonas syringae pv. tomato and Hyaloperonospora arabidopsidis. Antagonizes GLK1 and GLK2 transcriptional activity, shifting the balance from chloroplast maintenance towards deterioration during leaf senescence. Promotes the expression of senescence-associated genes, including ENDO1/BFN1, SWEET15/SAG29 and SINA1/At3g13672, during senescence onset. The polypeptide is NAC domain-containing protein 92 (Arabidopsis thaliana (Mouse-ear cress)).